The sequence spans 623 residues: V-type proton ATPase catalytic subunit A (623 aa).

Position 252–259 (Gly-252–Thr-259) interacts with ATP.

This sequence belongs to the ATPase alpha/beta chains family. V-ATPase is a heteromultimeric enzyme composed of a peripheral catalytic V1 complex (main components: subunits A, B, C, D, E, and F) attached to an integral membrane V0 proton pore complex (main component: the proteolipid protein).

The enzyme catalyses ATP + H2O + 4 H(+)(in) = ADP + phosphate + 5 H(+)(out). In terms of biological role, catalytic subunit of the peripheral V1 complex of vacuolar ATPase. V-ATPase vacuolar ATPase is responsible for acidifying a variety of intracellular compartments in eukaryotic cells. This is V-type proton ATPase catalytic subunit A from Citrus unshiu (Satsuma mandarin).